Consider the following 433-residue polypeptide: Phosphomethylpyrimidine synthase (433 aa).

Substrate-binding positions include asparagine 69, methionine 98, tyrosine 127, histidine 163, 185–187, 226–229, and glutamate 265; these read SRG and DACR. Histidine 269 serves as a coordination point for Zn(2+). Tyrosine 292 is a binding site for substrate. Histidine 333 contacts Zn(2+). [4Fe-4S] cluster-binding residues include cysteine 409, cysteine 412, and cysteine 416.

It belongs to the ThiC family. It depends on [4Fe-4S] cluster as a cofactor.

The enzyme catalyses 5-amino-1-(5-phospho-beta-D-ribosyl)imidazole + S-adenosyl-L-methionine = 4-amino-2-methyl-5-(phosphooxymethyl)pyrimidine + CO + 5'-deoxyadenosine + formate + L-methionine + 3 H(+). It functions in the pathway cofactor biosynthesis; thiamine diphosphate biosynthesis. Its function is as follows. Catalyzes the synthesis of the hydroxymethylpyrimidine phosphate (HMP-P) moiety of thiamine from aminoimidazole ribotide (AIR) in a radical S-adenosyl-L-methionine (SAM)-dependent reaction. This is Phosphomethylpyrimidine synthase from Clostridioides difficile (strain 630) (Peptoclostridium difficile).